A 205-amino-acid chain; its full sequence is Methylthioribulose-1-phosphate dehydratase (205 aa).

Positions 94 and 96 each coordinate Zn(2+).

It belongs to the aldolase class II family. MtnB subfamily. Zn(2+) serves as cofactor.

The catalysed reaction is 5-(methylsulfanyl)-D-ribulose 1-phosphate = 5-methylsulfanyl-2,3-dioxopentyl phosphate + H2O. Its pathway is amino-acid biosynthesis; L-methionine biosynthesis via salvage pathway; L-methionine from S-methyl-5-thio-alpha-D-ribose 1-phosphate: step 2/6. Catalyzes the dehydration of methylthioribulose-1-phosphate (MTRu-1-P) into 2,3-diketo-5-methylthiopentyl-1-phosphate (DK-MTP-1-P). The chain is Methylthioribulose-1-phosphate dehydratase from Pectobacterium atrosepticum (strain SCRI 1043 / ATCC BAA-672) (Erwinia carotovora subsp. atroseptica).